The following is a 131-amino-acid chain: Secreted RxLR effector protein 45 (131 aa).

An N-terminal signal peptide occupies residues 1 to 16 (MSIFIFISLVLGLAHQ). The RxLR signature appears at 56 to 59 (RPLR). N128 is a glycosylation site (N-linked (GlcNAc...) asparagine).

This sequence belongs to the RxLR effector family.

It localises to the secreted. The protein resides in the host nucleus. Secreted effector that completely suppresses the host cell death induced by cell death-inducing proteins. This Plasmopara viticola (Downy mildew of grapevine) protein is Secreted RxLR effector protein 45.